The following is a 184-amino-acid chain: uncharacterized protein (184 aa).

Positions 1-23 (MFCLLHLCFYLANFASSIKRTHA) are cleaved as a signal peptide.

It is found in the secreted. This is an uncharacterized protein from Homo sapiens (Human).